Reading from the N-terminus, the 825-residue chain is NT-3 growth factor receptor (825 aa).

A signal peptide spans 1–31 (MDVSLCPAKCSFWRIFLLGSVWLDYVGSVLA). Cystine bridges form between C32-C38 and C36-C45. The Extracellular portion of the chain corresponds to 32–429 (CPANCVCSKT…TVTHKPEEDT (398 aa)). 3 N-linked (GlcNAc...) asparagine glycosylation sites follow: N68, N72, and N79. LRR repeat units lie at residues 104 to 125 (GLQKLTIKNSGLRNIQPRAFAK) and 128 to 149 (HLRYINLSSNRLTTLSWQLFQT). N-linked (GlcNAc...) asparagine glycans are attached at residues N133 and N163. In terms of domain architecture, LRRCT spans 160–209 (NFFNCSCDIRWMQLWQEQGEARLDSQSLYCISADGSQLPLFRMNISQCDL). 2 disulfides stabilise this stretch: C164–C189 and C166–C207. N-linked (GlcNAc...) asparagine glycosylation is found at N203, N218, N232, N259, N267, N272, and N294. 2 Ig-like C2-type domains span residues 210-300 (PEIS…VALT) and 309-382 (SLVE…IAKN). C231 and C284 are oxidised to a cystine. A disulfide bridge connects residues C320 and C362. N-linked (GlcNAc...) asparagine glycans are attached at residues N375 and N388. A helical transmembrane segment spans residues 430–453 (FGVSIAVGLAAFACVLLVVLFIMI). At 454-825 (NKYGRRSKFG…ATPIYLDILG (372 aa)) the chain is on the cytoplasmic side. S493 is modified (phosphoserine). The residue at position 516 (Y516) is a Phosphotyrosine. Residues 538–825 (IVLKRELGEG…ATPIYLDILG (288 aa)) enclose the Protein kinase domain. Residues 544–552 (LGEGAFGKV) and K572 each bind ATP. The Proton acceptor role is filled by D679. Residues Y705, Y709, and Y710 each carry the phosphotyrosine; by autocatalysis modification.

The protein belongs to the protein kinase superfamily. Tyr protein kinase family. Insulin receptor subfamily. In terms of assembly, exists in a dynamic equilibrium between monomeric (low affinity) and dimeric (high affinity) structures. Binds SH2B2. Interacts with SQSTM1 and KIDINS220. Interacts with PTPRS. Interacts with MAPK8IP3/JIP3. Ligand-mediated auto-phosphorylation. Isoform 2 expression is restricted to specific areas in adult brain. Isoform 3 transcripts are readily detected early during embryogenesis and are expressed predominantly in adult brain and gonads.

The protein resides in the membrane. It catalyses the reaction L-tyrosyl-[protein] + ATP = O-phospho-L-tyrosyl-[protein] + ADP + H(+). In terms of biological role, receptor tyrosine kinase involved in nervous system and probably heart development. Upon binding of its ligand NTF3/neurotrophin-3, NTRK3 autophosphorylates and activates different signaling pathways, including the phosphatidylinositol 3-kinase/AKT and the MAPK pathways, that control cell survival and differentiation. This is NT-3 growth factor receptor (Ntrk3) from Mus musculus (Mouse).